Here is a 64-residue protein sequence, read N- to C-terminus: Conotoxin Cal6.24 (64 aa).

The N-terminal stretch at 1 to 22 (MKLTCVMIVAVLVLTVCKVVTS) is a signal peptide. Disulfide bonds link Cys32-Cys50, Cys40-Cys54, and Cys49-Cys60.

Expressed by the venom duct.

Its subcellular location is the secreted. Its function is as follows. Probable neurotoxin. The protein is Conotoxin Cal6.24 of Californiconus californicus (California cone).